A 221-amino-acid chain; its full sequence is Ribosomal RNA small subunit methyltransferase Nep1 (221 aa).

Residues G174, G179, and 196–201 (VGDEPL) each bind S-adenosyl-L-methionine.

This sequence belongs to the class IV-like SAM-binding methyltransferase superfamily. RNA methyltransferase NEP1 family. In terms of assembly, homodimer.

It carries out the reaction a pseudouridine in rRNA + S-adenosyl-L-methionine = an N(1)-methylpseudouridine in rRNA + S-adenosyl-L-homocysteine + H(+). In terms of biological role, methyltransferase involved in ribosomal biogenesis. Specifically catalyzes the N1-methylation of the pseudouridine corresponding to position 914 in M.jannaschii 16S rRNA. This is Ribosomal RNA small subunit methyltransferase Nep1 from Pyrobaculum neutrophilum (strain DSM 2338 / JCM 9278 / NBRC 100436 / V24Sta) (Thermoproteus neutrophilus).